A 207-amino-acid polypeptide reads, in one-letter code: Urease accessory protein UreG (207 aa).

16–23 (GPVGSGKT) lines the GTP pocket.

It belongs to the SIMIBI class G3E GTPase family. UreG subfamily. As to quaternary structure, homodimer. UreD, UreF and UreG form a complex that acts as a GTP-hydrolysis-dependent molecular chaperone, activating the urease apoprotein by helping to assemble the nickel containing metallocenter of UreC. The UreE protein probably delivers the nickel.

Its subcellular location is the cytoplasm. Functionally, facilitates the functional incorporation of the urease nickel metallocenter. This process requires GTP hydrolysis, probably effectuated by UreG. In Shewanella halifaxensis (strain HAW-EB4), this protein is Urease accessory protein UreG.